A 294-amino-acid polypeptide reads, in one-letter code: Bifunctional protein FolD (294 aa).

Residues 175-177 (GVS) and I243 each bind NADP(+).

This sequence belongs to the tetrahydrofolate dehydrogenase/cyclohydrolase family. As to quaternary structure, homodimer.

The catalysed reaction is (6R)-5,10-methylene-5,6,7,8-tetrahydrofolate + NADP(+) = (6R)-5,10-methenyltetrahydrofolate + NADPH. It carries out the reaction (6R)-5,10-methenyltetrahydrofolate + H2O = (6R)-10-formyltetrahydrofolate + H(+). Its pathway is one-carbon metabolism; tetrahydrofolate interconversion. Catalyzes the oxidation of 5,10-methylenetetrahydrofolate to 5,10-methenyltetrahydrofolate and then the hydrolysis of 5,10-methenyltetrahydrofolate to 10-formyltetrahydrofolate. The sequence is that of Bifunctional protein FolD from Xanthomonas campestris pv. campestris (strain 8004).